The chain runs to 874 residues: Alanine--tRNA ligase (874 aa).

Residues His-563, His-567, Cys-665, and His-669 each contribute to the Zn(2+) site.

The protein belongs to the class-II aminoacyl-tRNA synthetase family. Zn(2+) is required as a cofactor.

Its subcellular location is the cytoplasm. The enzyme catalyses tRNA(Ala) + L-alanine + ATP = L-alanyl-tRNA(Ala) + AMP + diphosphate. Catalyzes the attachment of alanine to tRNA(Ala) in a two-step reaction: alanine is first activated by ATP to form Ala-AMP and then transferred to the acceptor end of tRNA(Ala). Also edits incorrectly charged Ser-tRNA(Ala) and Gly-tRNA(Ala) via its editing domain. This Actinobacillus pleuropneumoniae serotype 7 (strain AP76) protein is Alanine--tRNA ligase.